The chain runs to 261 residues: Ribonuclease PH (261 aa).

Phosphate contacts are provided by residues arginine 86 and glycine 124–arginine 126.

Belongs to the RNase PH family. Homohexameric ring arranged as a trimer of dimers.

The catalysed reaction is tRNA(n+1) + phosphate = tRNA(n) + a ribonucleoside 5'-diphosphate. Phosphorolytic 3'-5' exoribonuclease that plays an important role in tRNA 3'-end maturation. Removes nucleotide residues following the 3'-CCA terminus of tRNAs; can also add nucleotides to the ends of RNA molecules by using nucleoside diphosphates as substrates, but this may not be physiologically important. Probably plays a role in initiation of 16S rRNA degradation (leading to ribosome degradation) during starvation. The sequence is that of Ribonuclease PH from Persephonella marina (strain DSM 14350 / EX-H1).